The chain runs to 304 residues: MQKFDTKTFQGLILTLQDYWARQGCTIVQPLDMEVGAGTSHPMTCLRALGPEPMATAYVQPSRRPTDGRYGENPNRLQHYYQFQVVIKPSPENIQELYLGSLKELGMDPTIHDIRFVEDNWENPTLGAWGLGWEVWLNGMEVTQFTYFQQVGGLECKPVTGEITYGLERLAMYIQGVDSVYDLVWSDGLLGKTTYGDVFHQNEVEQSTYNFEHADVDFLFSCFEQYEKEAQHLLALEKPLPLPAYERILKAAHSFNLLDARKAISVTERQRYILRIRTLTKAVAEAYYASREALGFPMCNKKES.

It belongs to the class-II aminoacyl-tRNA synthetase family. As to quaternary structure, tetramer of two alpha and two beta subunits.

Its subcellular location is the cytoplasm. The catalysed reaction is tRNA(Gly) + glycine + ATP = glycyl-tRNA(Gly) + AMP + diphosphate. The chain is Glycine--tRNA ligase alpha subunit from Pectobacterium atrosepticum (strain SCRI 1043 / ATCC BAA-672) (Erwinia carotovora subsp. atroseptica).